The sequence spans 558 residues: Dihydroxy-acid dehydratase (558 aa).

Cys-50 is a binding site for [2Fe-2S] cluster. Asp-82 is a binding site for Mg(2+). Cys-123 is a binding site for [2Fe-2S] cluster. Mg(2+) is bound by residues Asp-124 and Lys-125. The residue at position 125 (Lys-125) is an N6-carboxylysine. [2Fe-2S] cluster is bound at residue Cys-195. Residue Glu-447 coordinates Mg(2+). Ser-472 serves as the catalytic Proton acceptor.

Belongs to the IlvD/Edd family. In terms of assembly, homodimer. It depends on [2Fe-2S] cluster as a cofactor. The cofactor is Mg(2+).

It carries out the reaction (2R)-2,3-dihydroxy-3-methylbutanoate = 3-methyl-2-oxobutanoate + H2O. The catalysed reaction is (2R,3R)-2,3-dihydroxy-3-methylpentanoate = (S)-3-methyl-2-oxopentanoate + H2O. The protein operates within amino-acid biosynthesis; L-isoleucine biosynthesis; L-isoleucine from 2-oxobutanoate: step 3/4. Its pathway is amino-acid biosynthesis; L-valine biosynthesis; L-valine from pyruvate: step 3/4. Functions in the biosynthesis of branched-chain amino acids. Catalyzes the dehydration of (2R,3R)-2,3-dihydroxy-3-methylpentanoate (2,3-dihydroxy-3-methylvalerate) into 2-oxo-3-methylpentanoate (2-oxo-3-methylvalerate) and of (2R)-2,3-dihydroxy-3-methylbutanoate (2,3-dihydroxyisovalerate) into 2-oxo-3-methylbutanoate (2-oxoisovalerate), the penultimate precursor to L-isoleucine and L-valine, respectively. In Saccharolobus islandicus (strain Y.N.15.51 / Yellowstone #2) (Sulfolobus islandicus), this protein is Dihydroxy-acid dehydratase.